Here is a 155-residue protein sequence, read N- to C-terminus: SsrA-binding protein (155 aa).

The protein belongs to the SmpB family.

The protein resides in the cytoplasm. Its function is as follows. Required for rescue of stalled ribosomes mediated by trans-translation. Binds to transfer-messenger RNA (tmRNA), required for stable association of tmRNA with ribosomes. tmRNA and SmpB together mimic tRNA shape, replacing the anticodon stem-loop with SmpB. tmRNA is encoded by the ssrA gene; the 2 termini fold to resemble tRNA(Ala) and it encodes a 'tag peptide', a short internal open reading frame. During trans-translation Ala-aminoacylated tmRNA acts like a tRNA, entering the A-site of stalled ribosomes, displacing the stalled mRNA. The ribosome then switches to translate the ORF on the tmRNA; the nascent peptide is terminated with the 'tag peptide' encoded by the tmRNA and targeted for degradation. The ribosome is freed to recommence translation, which seems to be the essential function of trans-translation. The sequence is that of SsrA-binding protein from Streptococcus equi subsp. equi (strain 4047).